A 358-amino-acid polypeptide reads, in one-letter code: Carbohydrate sulfotransferase 10 (358 aa).

The Cytoplasmic segment spans residues 1–6; that stretch reads MHHQWL. Residues 7-27 traverse the membrane as a helical; Signal-anchor for type II membrane protein segment; sequence LLAACFWVIFMFMVASKFITL. Over 28 to 358 the chain is Lumenal; that stretch reads TFKDPDGYGA…GYRVPDFLLN (331 aa). N-linked (GlcNAc...) asparagine glycosylation is present at N101. Residues 129-135 and 191-199 each bind 3'-phosphoadenylyl sulfate; these read PKVGNTQ and RDPFERLIS. A glycan (N-linked (GlcNAc...) asparagine) is linked at N318.

It belongs to the sulfotransferase 2 family. As to expression, predominantly expressed in hypertrophic, prehypertrophic and proliferative chondrocytes at E12 but is down-regulated in epiphyseal chondrocytes.

Its subcellular location is the golgi apparatus membrane. Catalyzes the transfer of sulfate to position 3 of terminal glucuronic acid of both protein- and lipid-linked oligosaccharides. Participates in biosynthesis of HNK-1 carbohydrate structure, a sulfated glucuronyl-lactosaminyl residue carried by many neural recognition molecules, which is involved in cell interactions during ontogenetic development and in synaptic plasticity in the adult. The chain is Carbohydrate sulfotransferase 10 (CHST10) from Gallus gallus (Chicken).